The primary structure comprises 185 residues: Ribosome-recycling factor (185 aa).

It belongs to the RRF family.

It is found in the cytoplasm. Responsible for the release of ribosomes from messenger RNA at the termination of protein biosynthesis. May increase the efficiency of translation by recycling ribosomes from one round of translation to another. This is Ribosome-recycling factor from Aliarcobacter butzleri (strain RM4018) (Arcobacter butzleri).